The sequence spans 237 residues: tRNA (guanine-N(7)-)-methyltransferase (237 aa).

E65, E90, D117, and D140 together coordinate S-adenosyl-L-methionine. D140 is a catalytic residue. Substrate-binding positions include K144, D176, and 212–215 (TKFE). Positions 197 to 217 (TCGPRQFSPRGERPETKFERR) are disordered. A compositionally biased stretch (basic and acidic residues) spans 206-217 (RGERPETKFERR).

It belongs to the class I-like SAM-binding methyltransferase superfamily. TrmB family.

The enzyme catalyses guanosine(46) in tRNA + S-adenosyl-L-methionine = N(7)-methylguanosine(46) in tRNA + S-adenosyl-L-homocysteine. Its pathway is tRNA modification; N(7)-methylguanine-tRNA biosynthesis. Catalyzes the formation of N(7)-methylguanine at position 46 (m7G46) in tRNA. This is tRNA (guanine-N(7)-)-methyltransferase from Alkalilimnicola ehrlichii (strain ATCC BAA-1101 / DSM 17681 / MLHE-1).